Consider the following 210-residue polypeptide: ATP-dependent Clp protease proteolytic subunit (210 aa).

The active-site Nucleophile is the S106. Residue H131 is part of the active site.

This sequence belongs to the peptidase S14 family. Fourteen ClpP subunits assemble into 2 heptameric rings which stack back to back to give a disk-like structure with a central cavity, resembling the structure of eukaryotic proteasomes.

The protein resides in the cytoplasm. The catalysed reaction is Hydrolysis of proteins to small peptides in the presence of ATP and magnesium. alpha-casein is the usual test substrate. In the absence of ATP, only oligopeptides shorter than five residues are hydrolyzed (such as succinyl-Leu-Tyr-|-NHMec, and Leu-Tyr-Leu-|-Tyr-Trp, in which cleavage of the -Tyr-|-Leu- and -Tyr-|-Trp bonds also occurs).. Its function is as follows. Cleaves peptides in various proteins in a process that requires ATP hydrolysis. Has a chymotrypsin-like activity. Plays a major role in the degradation of misfolded proteins. The chain is ATP-dependent Clp protease proteolytic subunit from Bradyrhizobium sp. (strain BTAi1 / ATCC BAA-1182).